The primary structure comprises 682 residues: DNA-directed RNA polymerase subunit beta' (682 aa).

Cysteine 69, cysteine 71, cysteine 87, and cysteine 90 together coordinate Zn(2+). 3 residues coordinate Mg(2+): aspartate 489, aspartate 491, and aspartate 493.

The protein belongs to the RNA polymerase beta' chain family. RpoC1 subfamily. As to quaternary structure, in plastids the minimal PEP RNA polymerase catalytic core is composed of four subunits: alpha, beta, beta', and beta''. When a (nuclear-encoded) sigma factor is associated with the core the holoenzyme is formed, which can initiate transcription. The cofactor is Mg(2+). Requires Zn(2+) as cofactor.

It localises to the plastid. Its subcellular location is the chloroplast. It carries out the reaction RNA(n) + a ribonucleoside 5'-triphosphate = RNA(n+1) + diphosphate. Its function is as follows. DNA-dependent RNA polymerase catalyzes the transcription of DNA into RNA using the four ribonucleoside triphosphates as substrates. This is DNA-directed RNA polymerase subunit beta' from Brachypodium distachyon (Purple false brome).